The primary structure comprises 359 residues: 3-isopropylmalate dehydrogenase (359 aa).

NAD(+) is bound at residue 76 to 89; sequence GPKWDDPSAKTRPE. The substrate site is built by R96, R106, R134, and D223. Positions 223, 247, and 251 each coordinate Mg(2+). Position 281–293 (281–293) interacts with NAD(+); the sequence is GSAPDIAGKSVAN.

The protein belongs to the isocitrate and isopropylmalate dehydrogenases family. LeuB type 1 subfamily. Homodimer. Mg(2+) serves as cofactor. Mn(2+) is required as a cofactor.

Its subcellular location is the cytoplasm. It carries out the reaction (2R,3S)-3-isopropylmalate + NAD(+) = 4-methyl-2-oxopentanoate + CO2 + NADH. It participates in amino-acid biosynthesis; L-leucine biosynthesis; L-leucine from 3-methyl-2-oxobutanoate: step 3/4. Functionally, catalyzes the oxidation of 3-carboxy-2-hydroxy-4-methylpentanoate (3-isopropylmalate) to 3-carboxy-4-methyl-2-oxopentanoate. The product decarboxylates to 4-methyl-2 oxopentanoate. This chain is 3-isopropylmalate dehydrogenase, found in Rhodopirellula baltica (strain DSM 10527 / NCIMB 13988 / SH1).